Reading from the N-terminus, the 569-residue chain is Dicarboxylate transporter 1, chloroplastic (569 aa).

Residues 1–93 constitute a chloroplast transit peptide; sequence MASMALSLTS…VPSPAPVSAP (93 aa). Positions 23–74 are enriched in low complexity; the sequence is SLKPLSKSQPSISLPSLRSNASKSPSLSHKHFLSPPSLLLPHKLKPISASSP. A disordered region spans residues 23–93; sequence SLKPLSKSQP…VPSPAPVSAP (71 aa). Residues 75-90 show a composition bias toward pro residues; it reads TNPPPPPAPVPSPAPV. 12 helical membrane passes run 106–126, 134–154, 172–192, 241–261, 268–288, 317–337, 367–387, 388–408, 423–443, 450–470, 490–510, and 543–563; these read PLLA…PEGV, LAIF…LGAV, AAFS…FFFA, AGGI…SNVG, LGAW…SMFL, AAFV…YVVY, IMAV…KLGV, DAVT…VVTW, WFAA…ITWF, VVGG…LLYF, FLSV…VLSF, and YGFL…GLWW.

It belongs to the SLC13A/DASS transporter (TC 2.A.47) family. DIT1 subfamily. In terms of assembly, monomer. The N-terminus is blocked. Expressed in leaves.

Its subcellular location is the plastid. It localises to the chloroplast inner membrane. 2-oxoglutarate/malate translocator that transports carbon skeletons into chloroplasts for net glutamate synthesis. This translocator exchanges malate for internal succinate, fumarate and 2-oxoglutarate but not for aspartate and glutamate. Involved with DIT2 in primary ammonia assimilation and in the re-assimilation of ammonia generated by the photorespiratory pathway. Imports 2-oxoglutarate into plastids as precursor for ammonia assimilation. 2-oxoglutarate is converted to glutamate, the end product of ammonia assimilation, which is exported to the cytosol by DIT2. This is Dicarboxylate transporter 1, chloroplastic (DIT1) from Spinacia oleracea (Spinach).